The primary structure comprises 403 residues: Argininosuccinate synthase (403 aa).

ATP is bound by residues 10-18 (AYSGGLDTS) and A37. Residues Y88 and S93 each coordinate L-citrulline. An ATP-binding site is contributed by G118. T120, N124, and D125 together coordinate L-aspartate. Position 124 (N124) interacts with L-citrulline. L-citrulline contacts are provided by R128, S178, S187, E263, and Y275.

The protein belongs to the argininosuccinate synthase family. Type 1 subfamily. Homotetramer.

It localises to the cytoplasm. The enzyme catalyses L-citrulline + L-aspartate + ATP = 2-(N(omega)-L-arginino)succinate + AMP + diphosphate + H(+). It functions in the pathway amino-acid biosynthesis; L-arginine biosynthesis; L-arginine from L-ornithine and carbamoyl phosphate: step 2/3. This chain is Argininosuccinate synthase, found in Marinobacter nauticus (strain ATCC 700491 / DSM 11845 / VT8) (Marinobacter aquaeolei).